A 775-amino-acid polypeptide reads, in one-letter code: Aconitate hydratase, mitochondrial (775 aa).

The transit peptide at 1–25 directs the protein to the mitochondrion; that stretch reads MLTTLARASAMLLGARGFASAADLD. Substrate contacts are provided by residues glutamine 95 and 188–190; that span reads DSH. N-linked (GlcNAc...) asparagine glycosylation is present at asparagine 337. Cysteine 381 is a binding site for [4Fe-4S] cluster. Asparagine 383 carries N-linked (GlcNAc...) asparagine glycosylation. 2 residues coordinate [4Fe-4S] cluster: cysteine 444 and cysteine 447. Residue arginine 470 coordinates substrate. Asparagine 471 carries an N-linked (GlcNAc...) asparagine glycan. Arginine 475 and arginine 603 together coordinate substrate. N-linked (GlcNAc...) asparagine glycosylation is present at asparagine 608. 666–667 is a substrate binding site; it reads SR. Asparagine 754 and asparagine 763 each carry an N-linked (GlcNAc...) asparagine glycan.

This sequence belongs to the aconitase/IPM isomerase family. As to quaternary structure, monomer. It depends on [4Fe-4S] cluster as a cofactor.

The protein resides in the mitochondrion. It carries out the reaction citrate = D-threo-isocitrate. It participates in carbohydrate metabolism; tricarboxylic acid cycle; isocitrate from oxaloacetate: step 2/2. Catalyzes the isomerization of citrate to isocitrate via cis-aconitate. The sequence is that of Aconitate hydratase, mitochondrial from Arthroderma benhamiae (strain ATCC MYA-4681 / CBS 112371) (Trichophyton mentagrophytes).